A 1161-amino-acid chain; its full sequence is DNA-directed RNA polymerase III subunit 2 (1161 aa).

The segment at 1104–1125 (CRACGLLGYYNYKLKKAVCTTC) adopts a C4-type zinc-finger fold.

The protein belongs to the RNA polymerase beta chain family. As to quaternary structure, component of the RNA polymerase III (Pol III) complex consisting of 17 subunits.

The protein localises to the nucleus. The enzyme catalyses RNA(n) + a ribonucleoside 5'-triphosphate = RNA(n+1) + diphosphate. Functionally, DNA-dependent RNA polymerase catalyzes the transcription of DNA into RNA using the four ribonucleoside triphosphates as substrates. Second largest core component of RNA polymerase III which synthesizes small RNAs, such as 5S rRNA and tRNAs. Proposed to contribute to the polymerase catalytic activity and forms the polymerase active center together with the largest subunit. Pol III is composed of mobile elements and NRPC2 is part of the core element with the central large cleft and probably a clamp element that moves to open and close the cleft. Essential for the completion of the three rounds of mitosis in female megaspores required for the development of mature gametophytes. This is DNA-directed RNA polymerase III subunit 2 from Arabidopsis thaliana (Mouse-ear cress).